Reading from the N-terminus, the 282-residue chain is ATP synthase gamma chain (282 aa).

The protein belongs to the ATPase gamma chain family. As to quaternary structure, F-type ATPases have 2 components, CF(1) - the catalytic core - and CF(0) - the membrane proton channel. CF(1) has five subunits: alpha(3), beta(3), gamma(1), delta(1), epsilon(1). CF(0) has three main subunits: a, b and c.

It is found in the cell membrane. Produces ATP from ADP in the presence of a proton gradient across the membrane. The gamma chain is believed to be important in regulating ATPase activity and the flow of protons through the CF(0) complex. In Clostridium botulinum (strain 657 / Type Ba4), this protein is ATP synthase gamma chain.